Consider the following 465-residue polypeptide: Argininosuccinate lyase (465 aa).

This sequence belongs to the lyase 1 family. Argininosuccinate lyase subfamily.

The protein localises to the cytoplasm. It carries out the reaction 2-(N(omega)-L-arginino)succinate = fumarate + L-arginine. Its pathway is amino-acid biosynthesis; L-arginine biosynthesis; L-arginine from L-ornithine and carbamoyl phosphate: step 3/3. This chain is Argininosuccinate lyase, found in Deinococcus geothermalis (strain DSM 11300 / CIP 105573 / AG-3a).